Here is an 84-residue protein sequence, read N- to C-terminus: Sec-independent protein translocase protein TatA (84 aa).

The helical transmembrane segment at M1–G21 threads the bilayer. The segment at M46–A84 is disordered. Over residues S48–S63 the composition is skewed to polar residues.

It belongs to the TatA/E family. In terms of assembly, the Tat system comprises two distinct complexes: a TatABC complex, containing multiple copies of TatA, TatB and TatC subunits, and a separate TatA complex, containing only TatA subunits. Substrates initially bind to the TatABC complex, which probably triggers association of the separate TatA complex to form the active translocon.

Its subcellular location is the cell membrane. Part of the twin-arginine translocation (Tat) system that transports large folded proteins containing a characteristic twin-arginine motif in their signal peptide across membranes. TatA could form the protein-conducting channel of the Tat system. This is Sec-independent protein translocase protein TatA from Mycolicibacterium gilvum (strain PYR-GCK) (Mycobacterium gilvum (strain PYR-GCK)).